A 438-amino-acid polypeptide reads, in one-letter code: Protein translocase subunit SecY (438 aa).

The helical transmembrane segment at 1–43 (MKIKPILELIPEVKRPLKGVSFKEKIQWTGLVLILYFILGTID) threads the bilayer. Topologically, residues 44–54 (IYMGGAEMPAM) are extracellular. An intramembrane region (helical) is located at residues 55–62 (FAFWQTVT). The chain crosses the membrane as a discontinuously helical span at residues 55–83 (FAFWQTVTASKMGTLITLGIGPIVTAGII). Residues 63-74 (ASKMGTLITLGI) lie within the membrane without spanning it. The segment at residues 75 to 83 (GPIVTAGII) is an intramembrane region (helical). The Cytoplasmic portion of the chain corresponds to 84–104 (MQLLVGSELISLDLSKPMNRA). The helical transmembrane segment at 105 to 129 (LFQGLQKLFGIFLCFLEAVMFVGAG) threads the bilayer. Topologically, residues 130–136 (AFGVVNS) are extracellular. A helical transmembrane segment spans residues 137–161 (TLALILVLQLALGAILVIYLDEIVS). The Cytoplasmic portion of the chain corresponds to 162–167 (RYGIGS). The helical transmembrane segment at 168–186 (GIGLFIAAGVAQTIFVGAF) threads the bilayer. Residues 187–209 (GAEGYLWKFFSAMSVGSLGIAFE) lie on the Extracellular side of the membrane. The helical transmembrane segment at 210-231 (YILPILSTLFVFLVVVYVESIR) threads the bilayer. Over 232–256 (VEIPLAHGRVKGAVGKYPIKFIYVS) the chain is Cytoplasmic. Residues 257-278 (NLPVILAAALFANIQLWGMFLD) form a helical membrane-spanning segment. Topologically, residues 279-315 (RMGYPILGQYSNGTAVSGIAYYFSTPYGISNIISDPL) are extracellular. Residues 316–335 (HAIFYTLMMVIFCILFGLFW) form a helical membrane-spanning segment. The Cytoplasmic portion of the chain corresponds to 336–378 (VETSGLDAKSMAKKLGNLDMAIKGFRKSQKSIEQRLKRYIKPI). The chain crosses the membrane as a helical span at residues 379 to 397 (TVMGSAFVGFLAAAADFTG). Over 398–400 (ALG) the chain is Extracellular. A helical membrane pass occupies residues 401–415 (GGTGVLLTVSIVYRL). Residues 416 to 438 (YEQLVQEQLSELHPAVAKFVGKR) are Cytoplasmic-facing.

It belongs to the SecY/SEC61-alpha family. As to quaternary structure, component of the Sec protein translocase complex. Heterotrimer consisting of alpha (SecY), beta (SecG) and gamma (SecE) subunits. The heterotrimers can form oligomers, although 1 heterotrimer is thought to be able to translocate proteins. Interacts with the ribosome. May interact with SecDF, and other proteins may be involved.

Its subcellular location is the cell membrane. In terms of biological role, the central subunit of the protein translocation channel SecYEG. Consists of two halves formed by TMs 1-5 and 6-10. These two domains form a lateral gate at the front which open onto the bilayer between TMs 2 and 7, and are clamped together by SecE at the back. The channel is closed by both a pore ring composed of hydrophobic SecY resides and a short helix (helix 2A) on the extracellular side of the membrane which forms a plug. The plug probably moves laterally to allow the channel to open. The ring and the pore may move independently. The sequence is that of Protein translocase subunit SecY from Methanococcus vannielii.